A 291-amino-acid polypeptide reads, in one-letter code: tRNA dimethylallyltransferase (291 aa).

9-16 (GPTASGKT) is an ATP binding site. Substrate is bound at residue 11–16 (TASGKT). The tract at residues 34-37 (DSLQ) is interaction with substrate tRNA.

The protein belongs to the IPP transferase family. As to quaternary structure, monomer. Requires Mg(2+) as cofactor.

The enzyme catalyses adenosine(37) in tRNA + dimethylallyl diphosphate = N(6)-dimethylallyladenosine(37) in tRNA + diphosphate. Functionally, catalyzes the transfer of a dimethylallyl group onto the adenine at position 37 in tRNAs that read codons beginning with uridine, leading to the formation of N6-(dimethylallyl)adenosine (i(6)A). The polypeptide is tRNA dimethylallyltransferase (Aster yellows witches'-broom phytoplasma (strain AYWB)).